We begin with the raw amino-acid sequence, 607 residues long: Monocarboxylate transporter 7 (607 aa).

The segment at 1 to 84 (MRASGQGPQR…PAETGCSRSR (84 aa)) is disordered. Over 1–105 (MRASGQGPQR…ANVYTQVPDG (105 aa)) the chain is Cytoplasmic. Residues 106–126 (GWGWAVAVSFFFVEVFTYGII) form a helical membrane-spanning segment. Topologically, residues 127–146 (KSFGVFFNDLMDSFDESNSK) are extracellular. The chain crosses the membrane as a helical span at residues 147–167 (ISWIISICVFVLTFTAPLSTV). Over 168–175 (LSNRFGHR) the chain is Cytoplasmic. The chain crosses the membrane as a helical span at residues 176–196 (LVVMAGGLLISLGMITASFSQ). The Extracellular segment spans residues 197-202 (RVYHMY). A helical transmembrane segment spans residues 203–223 (ISIGVISGLGYCFSFLPTVTI). Residues 224-233 (LSQYFDKRRS) are Cytoplasmic-facing. Residues 234–254 (VVTAVASTGECFAVFAFAPAI) traverse the membrane as a helical segment. Over 255–268 (TALKEHIGWRYSLL) the chain is Extracellular. Residues 269–289 (FVGLLQLNIMVCGALLRPIII) form a helical membrane-spanning segment. Over 290–383 (QGPGQSPKAV…KEKSFICYAL (94 aa)) the chain is Cytoplasmic. Ser-319, Ser-322, Ser-325, and Ser-332 each carry phosphoserine. Residues 384-404 (FGLFATLGFFAPSLYIIPLGI) form a helical membrane-spanning segment. Residues 405–414 (SLGIDPDRAA) are Extracellular-facing. The chain crosses the membrane as a helical span at residues 415-435 (FLLSTMAIAEVFGRIGAGFVL). Residues 436-442 (NREPIRK) lie on the Cytoplasmic side of the membrane. A helical transmembrane segment spans residues 443–463 (IYIELICVILLTASLFAFTFA). Topologically, residues 464–465 (TE) are extracellular. The chain crosses the membrane as a helical span at residues 466–486 (FWGLMLCSVFFGSMVGTIGGT). Residues 487-507 (HIPMLAEDDVVGIEKMSSAAG) lie on the Cytoplasmic side of the membrane. The chain crosses the membrane as a helical span at residues 508–528 (VYVFIQSISGLAGPPLAGLLV). At 529-536 (DQSKIYSR) the chain is on the extracellular side. The chain crosses the membrane as a helical span at residues 537-557 (AFYSCAAGMCLAAVCLALVRP). Over 558–607 (CKKGLCQNSHSGENQTDRQRGKALQDIPEDFLEMDLGKCEHRAHMKMDPV) the chain is Cytoplasmic.

The protein belongs to the major facilitator superfamily. Monocarboxylate porter (TC 2.A.1.13) family. Forms functional complexes with BSG/CD147 or EMB/GP70 ancillary proteins.

The protein localises to the basolateral cell membrane. It carries out the reaction taurine(out) = taurine(in). Its function is as follows. Monocarboxylate transporter selective for taurine. May associate with BSG/CD147 or EMB/GP70 ancillary proteins to mediate facilitative efflux or influx of taurine across the plasma membrane. The transport is pH- and sodium-independent. Rather low-affinity, is likely effective for taurine transport in tissues where taurine is present at high concentrations. The protein is Monocarboxylate transporter 7 of Mus musculus (Mouse).